A 298-amino-acid polypeptide reads, in one-letter code: MLNTEKVKLGICPIGWTNDDMPDLGKENTFEQAVSEMALAGFKGTEVGNKYPKDVNVLKKALDLRNLQIASAWFSSFLTTKPYEETEKEFIAHRDFLHEMGAKVIVVSEQGHSIQGEMDTPICEGKYYFNEEEWKLLADGLNKLGRLAEDKGMKIVYHHHMGTGVQTTDEIDKLMSMTDESLVYLLFDTGHLVYSGENPIAILNKYANRIKHVHLKDIRADVLEKVKKEKMSFLMGVREGSFTVPGDGCIDFEPIFKILDENNYEGWILVEAEQDPAIANPFEYAMKARKYIKEKTGF.

The protein belongs to the IolE/MocC family. Glutathione serves as cofactor. It depends on Co(2+) as a cofactor. Requires Mn(2+) as cofactor.

It carries out the reaction scyllo-inosose = 3D-3,5/4-trihydroxycyclohexane-1,2-dione + H2O. Its pathway is polyol metabolism; myo-inositol degradation into acetyl-CoA; acetyl-CoA from myo-inositol: step 2/7. Catalyzes the dehydration of inosose (2-keto-myo-inositol, 2KMI or 2,4,6/3,5-pentahydroxycyclohexanone) to 3D-(3,5/4)-trihydroxycyclohexane-1,2-dione (D-2,3-diketo-4-deoxy-epi-inositol). The protein is Inosose dehydratase of Clostridium beijerinckii (strain ATCC 51743 / NCIMB 8052) (Clostridium acetobutylicum).